Here is a 467-residue protein sequence, read N- to C-terminus: Cysteine--tRNA ligase (467 aa).

A Zn(2+)-binding site is contributed by Cys28. A 'HIGH' region motif is present at residues 30-40 (MTVYDHCHLGH). Positions 209, 234, and 238 each coordinate Zn(2+). Positions 266–270 (KMSKS) match the 'KMSKS' region motif. Lys269 lines the ATP pocket.

The protein belongs to the class-I aminoacyl-tRNA synthetase family. In terms of assembly, monomer. It depends on Zn(2+) as a cofactor.

Its subcellular location is the cytoplasm. The enzyme catalyses tRNA(Cys) + L-cysteine + ATP = L-cysteinyl-tRNA(Cys) + AMP + diphosphate. The chain is Cysteine--tRNA ligase from Nitrosomonas eutropha (strain DSM 101675 / C91 / Nm57).